Reading from the N-terminus, the 247-residue chain is NAD(P)H-quinone oxidoreductase subunit K (247 aa).

Residues Cys-63, Cys-64, Cys-128, and Cys-159 each contribute to the [4Fe-4S] cluster site.

This sequence belongs to the complex I 20 kDa subunit family. NDH-1 can be composed of about 15 different subunits; different subcomplexes with different compositions have been identified which probably have different functions. [4Fe-4S] cluster serves as cofactor.

The protein resides in the cellular thylakoid membrane. It catalyses the reaction a plastoquinone + NADH + (n+1) H(+)(in) = a plastoquinol + NAD(+) + n H(+)(out). The enzyme catalyses a plastoquinone + NADPH + (n+1) H(+)(in) = a plastoquinol + NADP(+) + n H(+)(out). NDH-1 shuttles electrons from an unknown electron donor, via FMN and iron-sulfur (Fe-S) centers, to quinones in the respiratory and/or the photosynthetic chain. The immediate electron acceptor for the enzyme in this species is believed to be plastoquinone. Couples the redox reaction to proton translocation, and thus conserves the redox energy in a proton gradient. Cyanobacterial NDH-1 also plays a role in inorganic carbon-concentration. This is NAD(P)H-quinone oxidoreductase subunit K from Microcystis aeruginosa (strain NIES-843 / IAM M-2473).